Reading from the N-terminus, the 299-residue chain is GTPase Era (299 aa).

An Era-type G domain is found at 4–171; it reads KSGFVAILGR…VDILSENLDE (168 aa). The tract at residues 12–19 is G1; sequence GRPNVGKS. Residue 12–19 participates in GTP binding; the sequence is GRPNVGKS. Residues 38–42 are G2; the sequence is QTTRN. Residues 59 to 62 form a G3 region; it reads DTPG. Residues 59 to 63 and 121 to 124 contribute to the GTP site; these read DTPGI and NKID. Residues 121 to 124 are G4; sequence NKID. Residues 150–152 form a G5 region; the sequence is ISA. One can recognise a KH type-2 domain in the interval 202-280; that stretch reads TREEIPHSVA…FLETWVKVKK (79 aa).

Belongs to the TRAFAC class TrmE-Era-EngA-EngB-Septin-like GTPase superfamily. Era GTPase family. In terms of assembly, monomer.

The protein resides in the cytoplasm. It is found in the cell membrane. Functionally, an essential GTPase that binds both GDP and GTP, with rapid nucleotide exchange. Plays a role in 16S rRNA processing and 30S ribosomal subunit biogenesis and possibly also in cell cycle regulation and energy metabolism. The polypeptide is GTPase Era (Streptococcus pneumoniae (strain P1031)).